Reading from the N-terminus, the 191-residue chain is Inosine triphosphate pyrophosphatase (191 aa).

15 to 20 (TGNTNK) is a binding site for ITP. Glutamate 43 provides a ligand contact to Mg(2+). ITP contacts are provided by residues lysine 55, 71 to 72 (DT), lysine 88, 147 to 150 (FGWD), lysine 168, and 173 to 174 (HR).

This sequence belongs to the HAM1 NTPase family. As to quaternary structure, homodimer. It depends on Mg(2+) as a cofactor. Requires Mn(2+) as cofactor.

It localises to the cytoplasm. The protein resides in the nucleus. It catalyses the reaction ITP + H2O = IMP + diphosphate + H(+). The catalysed reaction is dITP + H2O = dIMP + diphosphate + H(+). The enzyme catalyses XTP + H2O = XMP + diphosphate + H(+). In terms of biological role, pyrophosphatase that hydrolyzes non-canonical purine nucleotides such as inosine triphosphate (ITP), deoxyinosine triphosphate (dITP) or xanthosine 5'-triphosphate (XTP) to their respective monophosphate derivatives. The enzyme does not distinguish between the deoxy- and ribose forms. Probably excludes non-canonical purines from RNA and DNA precursor pools, thus preventing their incorporation into RNA and DNA and avoiding chromosomal lesions. The sequence is that of Inosine triphosphate pyrophosphatase from Chaetomium globosum (strain ATCC 6205 / CBS 148.51 / DSM 1962 / NBRC 6347 / NRRL 1970) (Soil fungus).